The sequence spans 235 residues: Eukaryotic translation initiation factor 4E-1 (235 aa).

The segment covering 1–16 has biased composition (basic and acidic residues); sequence MAVEDTPKSVVTEEAK. Residues 1–59 are disordered; sequence MAVEDTPKSVVTEEAKPNSIENPIDRYHEEGDDAEEGEIAGGEGDGNVDESSKSGVPES. EIF4G-binding stretches follow at residues 60–63 and 70–106; these read HPLE and FDNP…NNMK. MRNA is bound by residues 78–83, K110, and 128–129; these read KQTSWG and WE. C133 and C171 are disulfide-bonded. The EIF4G-binding stretch occupies residues 154–163; the sequence is YTLLALIGEQ. Residues 178-183 and 223-227 each bind mRNA; these read RGKQER and KKLDR.

This sequence belongs to the eukaryotic initiation factor 4E family. EIF4F is a multi-subunit complex, the composition of which varies with external and internal environmental conditions. It is composed of at least EIF4A, EIF4E and EIF4G. EIF4E is also known to interact with other partners. In higher plants two isoforms of EIF4F have been identified, named isoform EIF4F and isoform EIF(iso)4F. Isoform EIF4F has subunits p220 and p26, whereas isoform EIF(iso)4F has subunits p82 and p28. Interacts directly with EXA1. As to quaternary structure, (Microbial infection) Interacts with viral genome-linked protein (VPg); this interaction is possible in susceptible hosts but impaired in resistant plants. In terms of processing, according to the redox status, the Cys-133-Cys-171 disulfide bridge may have a role in regulating protein function by affecting its ability to bind capped mRNA. In terms of tissue distribution, expressed in all tissues except in the cells of the specialization zone of the roots.

The protein localises to the nucleus. It localises to the cytoplasm. In terms of biological role, component of the protein complex eIF4F, which is involved in the recognition of the mRNA cap, ATP-dependent unwinding of 5'-terminal secondary structure and recruitment of mRNA to the ribosome. Recognizes and binds the 7-methylguanosine-containing mRNA cap during an early step in the initiation of protein synthesis and facilitates ribosome binding by inducing the unwinding of the mRNAs secondary structures. Key component of recessive resistance to potyviruses. Its function is as follows. (Microbial infection) Susceptibility host factor required for viral infection by recruiting viral RNAs to the host ribosomal complex via an interaction with viral genome-linked protein (VPg). This chain is Eukaryotic translation initiation factor 4E-1, found in Arabidopsis thaliana (Mouse-ear cress).